We begin with the raw amino-acid sequence, 377 residues long: Membrane protein MLC1 (377 aa).

Residues 1–23 are compositionally biased toward basic and acidic residues; that stretch reads MTQEPFREELAYDRMPTLERGRQ. The tract at residues 1-36 is disordered; sequence MTQEPFREELAYDRMPTLERGRQDPASYAPDAKPSD. Helical transmembrane passes span 52 to 72, 82 to 100, 111 to 131, and 144 to 164; these read WVFSVLMGSCLLVTSGFSLYL, YLRCAAGSCIPSAIVSFTV, FQILFVSTFAVTTTCLIWFGC, and FNLILLLLLELLMAATVIIAA. Phosphoserine occurs at positions 177 and 179. The next 4 helical transmembrane spans lie at 199-219, 230-250, 257-277, and 304-324; these read SVVEVIAGISAVLGGIIALNV, VTFFWILVACFPSAIASHVAA, LVEVLIAISSLTSPLLFTASG, and LLLLLLLVLLLQAGLNTGTAI.

In terms of assembly, interacts with ATP1B1. Part of a complex containing ATP1B1, TRPV4, AQP4 and HEPACAM. Expressed in the brain, with highest levels found in the amygdala, nucleus caudatus, thalamus and hippocampus.

It is found in the membrane. The protein resides in the cell membrane. It localises to the cytoplasm. The protein localises to the perinuclear region. Its subcellular location is the endoplasmic reticulum. Functionally, transmembrane protein mainly expressed in brain astrocytes that may play a role in transport across the blood-brain and brain-cerebrospinal fluid barriers. Regulates the response of astrocytes to hypo-osmosis by promoting calcium influx. May function as regulatory protein of membrane protein complexes such as ion channels. This chain is Membrane protein MLC1, found in Homo sapiens (Human).